Consider the following 522-residue polypeptide: MDITNRQAVLKNFLGNSPDWYKLAIMGFLIINPLVFFFVSPFVAGWMLVIEFIFTLAMALKCYPLQPGGLLAIQAVAIGMTSPHQVAEEIANNLEVLLLLVFMVAGIYFMKQLLLFVFTKLLLNIRSKTILSLAFCLASAFLSAFLDALTVIAVVISVSVGFYTIYHNVTSNHSDKDITDDSGIDNQDSHETLEQFRAFLRSLMMHAGVGTALGGVMTMVGEPQNLIIAKSAGWNFADFFIRMLPVTLPVFIFGLLVCLLVEKFKLFGYGAQLPERVRQVLTEYDQQANAKRTKQEKMKLIVQAIIGVWLVLALHLAEVGLVGLSVIILATSFCGITNEHSLGKAFQEALPFTALLTVFFAVVAVIIEQSLFTPIIQFVLQASPSAQLSLFYLFNGLLSSVSDNVFVGTVYINEARSAFEHGIVSLQQFELLAVAINTGTNLPSVATPNGQAAFLFLLTSALAPLIRLSYGRMVYMALPYTLVMTIVGLLGVEFLLVPMTEWLTQAGWISLPHITNGVAIPH.

9 helical membrane-spanning segments follow: residues 13 to 33, 98 to 118, 140 to 160, 239 to 259, 304 to 324, 356 to 376, 390 to 410, 446 to 466, and 477 to 497; these read FLGN…IINP, LLLV…LFVF, AFLS…SVSV, FFIR…LVCL, AIIG…LVGL, LTVF…TPII, LFYL…VGTV, ATPN…APLI, and ALPY…FLLV.

This sequence belongs to the NhaB Na(+)/H(+) (TC 2.A.34) antiporter family.

The protein localises to the cell inner membrane. The catalysed reaction is 2 Na(+)(in) + 3 H(+)(out) = 2 Na(+)(out) + 3 H(+)(in). Its function is as follows. Na(+)/H(+) antiporter that extrudes sodium in exchange for external protons. The sequence is that of Na(+)/H(+) antiporter NhaB from Yersinia pestis bv. Antiqua (strain Angola).